The primary structure comprises 88 residues: Small ribosomal subunit protein uS17 (88 aa).

Belongs to the universal ribosomal protein uS17 family. As to quaternary structure, part of the 30S ribosomal subunit.

In terms of biological role, one of the primary rRNA binding proteins, it binds specifically to the 5'-end of 16S ribosomal RNA. This chain is Small ribosomal subunit protein uS17, found in Methylorubrum extorquens (strain PA1) (Methylobacterium extorquens).